The primary structure comprises 354 residues: Probable cinnamyl alcohol dehydrogenase 1 (354 aa).

8 residues coordinate Zn(2+): Cys-47, His-69, Glu-70, Cys-100, Cys-103, Cys-106, Cys-114, and Cys-163. NADP(+)-binding positions include Thr-167, 188–193 (GLGGLG), 211–216 (STSESK), Thr-251, and 297–299 (SVT).

Belongs to the zinc-containing alcohol dehydrogenase family. Homodimer. Zn(2+) is required as a cofactor.

The catalysed reaction is (E)-cinnamyl alcohol + NADP(+) = (E)-cinnamaldehyde + NADPH + H(+). It catalyses the reaction (E)-coniferol + NADP(+) = (E)-coniferaldehyde + NADPH + H(+). The enzyme catalyses (E)-sinapyl alcohol + NADP(+) = (E)-sinapaldehyde + NADPH + H(+). It carries out the reaction (E)-4-coumaroyl alcohol + NADP(+) = (E)-4-coumaraldehyde + NADPH + H(+). The catalysed reaction is (E)-caffeyl alcohol + NADP(+) = (E)-caffeyl aldehyde + NADPH + H(+). It participates in aromatic compound metabolism; phenylpropanoid biosynthesis. Its function is as follows. Involved in lignin biosynthesis. Catalyzes the final step specific for the production of lignin monomers. Catalyzes the NADPH-dependent reduction of coniferaldehyde, 5-hydroxyconiferaldehyde, sinapaldehyde, 4-coumaraldehyde and caffeyl aldehyde to their respective alcohols. This Oryza sativa subsp. japonica (Rice) protein is Probable cinnamyl alcohol dehydrogenase 1.